A 73-amino-acid polypeptide reads, in one-letter code: Beta-defensin 40 (73 aa).

Positions 1–23 (MKISCFLLMIFFLSCFQINPVAV) are cleaved as a signal peptide. Disulfide bonds link Cys-29–Cys-58, Cys-36–Cys-51, and Cys-41–Cys-59.

The protein belongs to the beta-defensin family. Only expressed in epididymis (corpus, cauda and caput).

It localises to the secreted. Has antibacterial activity. This Mus musculus (Mouse) protein is Beta-defensin 40 (Defb40).